We begin with the raw amino-acid sequence, 680 residues long: DNA ligase (680 aa).

NAD(+) contacts are provided by residues 44–48, 93–94, and Glu-125; these read DHVYD and SM. Lys-127 (N6-AMP-lysine intermediate) is an active-site residue. NAD(+)-binding residues include Arg-148, Glu-182, Lys-298, and Lys-322. Positions 416, 419, 434, and 439 each coordinate Zn(2+). Residues 600 to 680 enclose the BRCT domain; it reads NPDSEWNGRR…QFSQAMKEEQ (81 aa).

This sequence belongs to the NAD-dependent DNA ligase family. LigA subfamily. The cofactor is Mg(2+). Requires Mn(2+) as cofactor.

The catalysed reaction is NAD(+) + (deoxyribonucleotide)n-3'-hydroxyl + 5'-phospho-(deoxyribonucleotide)m = (deoxyribonucleotide)n+m + AMP + beta-nicotinamide D-nucleotide.. Its function is as follows. DNA ligase that catalyzes the formation of phosphodiester linkages between 5'-phosphoryl and 3'-hydroxyl groups in double-stranded DNA using NAD as a coenzyme and as the energy source for the reaction. It is essential for DNA replication and repair of damaged DNA. This Limosilactobacillus reuteri (strain DSM 20016) (Lactobacillus reuteri) protein is DNA ligase.